The primary structure comprises 314 residues: Vacuolar membrane protein FOSTERSB_4073 (314 aa).

A disordered region spans residues 32–60 (KPTSSVVSETSSKSLPSLTSSAFSTSSGA). Residues 93–113 (VYIAVGAVIGAIFISILIWWL) traverse the membrane as a helical segment. S148, S254, and S274 each carry phosphoserine. Positions 240–309 (EERKLNLNRP…PSMFLDDVLN (70 aa)) are disordered. Over residues 254-269 (SPERKEKKINSMEGYH) the composition is skewed to basic and acidic residues.

It belongs to the PRM5 family.

The protein resides in the vacuole membrane. The protein is Vacuolar membrane protein FOSTERSB_4073 of Saccharomyces cerevisiae (strain FostersB) (Baker's yeast).